The primary structure comprises 115 residues: Large ribosomal subunit protein uL22 (115 aa).

This sequence belongs to the universal ribosomal protein uL22 family. As to quaternary structure, part of the 50S ribosomal subunit.

Functionally, this protein binds specifically to 23S rRNA; its binding is stimulated by other ribosomal proteins, e.g. L4, L17, and L20. It is important during the early stages of 50S assembly. It makes multiple contacts with different domains of the 23S rRNA in the assembled 50S subunit and ribosome. In terms of biological role, the globular domain of the protein is located near the polypeptide exit tunnel on the outside of the subunit, while an extended beta-hairpin is found that lines the wall of the exit tunnel in the center of the 70S ribosome. In Limosilactobacillus reuteri subsp. reuteri (strain JCM 1112) (Lactobacillus reuteri), this protein is Large ribosomal subunit protein uL22.